The sequence spans 180 residues: Cytokinin-beta-glucosidase 1 (180 aa).

Its function is as follows. Hydrolyzes cytokinin glucosides thus liberating free cytokinins. This Panax ginseng (Korean ginseng) protein is Cytokinin-beta-glucosidase 1 (ROLC1).